The chain runs to 314 residues: MPSTTNTAAANVIEKKPVSFSNILLGACLNLSEVTTLGQPLEVVKTTMAANRNFTFLESVKHVWSRGGILGYYQGLIPWAWIEASTKGAVLLFVSAEAEYRFKSLGLNNFASGILGGVTGGVTQAYLTMGFCTCMKTVEITRHKSASAGGVPQSSWSVFKNIYKKEGIRGINKGVNAVAIRQMTNWGSRFGLSRLVEDGIRKITGKTNKDDKLNPFEKIGASALGGGLSAWNQPIEVIRVEMQSKKEDPNRPKNLTVGKTFKYIYQSNGLKGLYRGVTPRIGLGIWQTVFMVGFGDMAKEFVARMTGETPVAKH.

3 Solcar repeats span residues 18 to 100 (VSFS…EAEY), 107 to 199 (LNNF…VEDG), and 217 to 301 (EKIG…AKEF). 5 helical membrane-spanning segments follow: residues 23–44 (ILLG…LEVV), 77–97 (IPWA…VSAE), 111–127 (ASGI…QAYL), 178–198 (VAIR…LVED), and 218–238 (KIGA…IEVI). A DNA-binding region spans residues 246 to 259 (KEDPNRPKNLTVGK). A helical membrane pass occupies residues 273-294 (LYRGVTPRIGLGIWQTVFMVGF).

This sequence belongs to the mitochondrial carrier (TC 2.A.29) family.

It localises to the mitochondrion inner membrane. The protein localises to the mitochondrion matrix. It is found in the mitochondrion nucleoid. With respect to regulation, strongly inhibited by mersalyl, p-chloromercuribenzenesulfonate, mercuric chloride, N-ethylmaleimide, pyridoxal 5'-phosphate, bathophenanthroline, and tannic acid. Partially inhibited by alpha-cyanocinnamate and bromescol purple. Weakly inhibited by butylmalonate and phenylsuccinate. Not inhibited by 1,2,3-benzenetricarboxylate or carboxyatractyloside. Functionally, mitochondrial antiporter which catalyzes the transport of citrate and oxoglutarate across the membrane. Also shows specificity for oxaloacetate, and to a lesser extent succinate and fumarate. Transports isocitrate, cis-aconitate and L-malate with very low efficiency. Does not show uniporter activity. Helps to maintain normal citrate levels and NADPH/NADP(+) ratios under conditions of oxidative stress. In addition, associates with the mitochondrial nucleoid and binds DNA in vitro, although the relevance of these data in vivo is unclear. This chain is Citrate/oxoglutarate carrier protein (YHM2), found in Saccharomyces cerevisiae (strain ATCC 204508 / S288c) (Baker's yeast).